Consider the following 443-residue polypeptide: D(2) dopamine receptor (443 aa).

Over 1-37 (MDPLNLSWYDDDLERQNWSRPFNGSDGKADRPHYNYY) the chain is Extracellular. N-linked (GlcNAc...) asparagine glycosylation is found at asparagine 5, asparagine 17, and asparagine 23. A helical transmembrane segment spans residues 38 to 60 (ATLLTLLIAVIVFGNVLVCMAVS). The Cytoplasmic portion of the chain corresponds to 61 to 70 (REKALQTTTN). The chain crosses the membrane as a helical span at residues 71–93 (YLIVSLAVADLLVATLVMPWVVY). The Extracellular segment spans residues 94–108 (LEVVGEWKFSRIHCD). Cysteine 107 and cysteine 182 form a disulfide bridge. The chain crosses the membrane as a helical span at residues 109–130 (IFVTLDVMMCTASILNLCAISI). Over 131–151 (DRYTAVAMPMLYNTRYSSKRR) the chain is Cytoplasmic. Residues 152-172 (VTVMISIVWVLSFTISCPLLF) traverse the membrane as a helical segment. Residues 173–188 (GLNNADQNECIIANPA) are Extracellular-facing. Residues 189 to 213 (FVVYSSIVSFYVPFIVTLLVYIKIY) traverse the membrane as a helical segment. The tract at residues 211–373 (KIYIVLRRRR…SQQKEKKATQ (163 aa)) is interaction with PPP1R9B. Residues 214–373 (IVLRRRRKRV…SQQKEKKATQ (160 aa)) are Cytoplasmic-facing. The disordered stretch occupies residues 281–332 (MEMLSSTSPPERTRYSPIPPSHHQLTLPDPSHHGLHSTPDSPAKPEKNGHAK). The segment covering 323–332 (AKPEKNGHAK) has biased composition (basic and acidic residues). A helical membrane pass occupies residues 374–395 (MLAIVLGVFIICWLPFFITHIL). Residues 396–409 (NIHCDCNIPPVLYS) lie on the Extracellular side of the membrane. Residues cysteine 399 and cysteine 401 are joined by a disulfide bond. The helical transmembrane segment at 410–431 (AFTWLGYVNSAVNPIIYTTFNI) threads the bilayer. At 432 to 443 (EFRKAFLKILHC) the chain is on the cytoplasmic side. Residue cysteine 443 is the site of S-palmitoyl cysteine attachment.

The protein belongs to the G-protein coupled receptor 1 family. As to quaternary structure, forms homo- and heterooligomers with DRD4. The interaction with DRD4 may modulate agonist-induced downstream signaling. Interacts with CADPS and CADPS2. Interacts with GPRASP1, PPP1R9B and CLIC6. Interacts with ARRB2. Interacts with HTR2A. Interacts with GNAI2 isoform sGi2, the interaction allows the creation of an intracellular pool of DRD2 that can be released to cell surface upon agonist stimulation. Interacts with DRD1. Interacts with KCNA2. Palmitoylated. Palmitoylation which is required for proper localization to the plasma membrane and stability of the receptor could be carried on by ZDHHC4, ZDHHC3 and ZDHHC8. Expressed in the anterior pituitary gland.

The protein localises to the cell membrane. It localises to the golgi apparatus membrane. Functionally, dopamine receptor whose activity is mediated by G proteins which inhibit adenylyl cyclase. Positively regulates postnatal regression of retinal hyaloid vessels via suppression of VEGFR2/KDR activity, downstream of OPN5. This Homo sapiens (Human) protein is D(2) dopamine receptor (DRD2).